Reading from the N-terminus, the 85-residue chain is Small ribosomal subunit protein uS17 (85 aa).

The protein belongs to the universal ribosomal protein uS17 family. As to quaternary structure, part of the 30S ribosomal subunit.

Its function is as follows. One of the primary rRNA binding proteins, it binds specifically to the 5'-end of 16S ribosomal RNA. The protein is Small ribosomal subunit protein uS17 of Haemophilus influenzae (strain 86-028NP).